Consider the following 298-residue polypeptide: Acetylglutamate kinase (298 aa).

Residues Gly69–Gly70, Arg91, and Asn196 each bind substrate.

Belongs to the acetylglutamate kinase family. ArgB subfamily.

The protein localises to the cytoplasm. It catalyses the reaction N-acetyl-L-glutamate + ATP = N-acetyl-L-glutamyl 5-phosphate + ADP. The protein operates within amino-acid biosynthesis; L-arginine biosynthesis; N(2)-acetyl-L-ornithine from L-glutamate: step 2/4. Its function is as follows. Catalyzes the ATP-dependent phosphorylation of N-acetyl-L-glutamate. In Rhodopseudomonas palustris (strain BisA53), this protein is Acetylglutamate kinase.